The primary structure comprises 256 residues: Imidazole glycerol phosphate synthase subunit HisF (256 aa).

Residues D12 and D131 contribute to the active site.

This sequence belongs to the HisA/HisF family. As to quaternary structure, heterodimer of HisH and HisF.

The protein localises to the cytoplasm. The catalysed reaction is 5-[(5-phospho-1-deoxy-D-ribulos-1-ylimino)methylamino]-1-(5-phospho-beta-D-ribosyl)imidazole-4-carboxamide + L-glutamine = D-erythro-1-(imidazol-4-yl)glycerol 3-phosphate + 5-amino-1-(5-phospho-beta-D-ribosyl)imidazole-4-carboxamide + L-glutamate + H(+). It participates in amino-acid biosynthesis; L-histidine biosynthesis; L-histidine from 5-phospho-alpha-D-ribose 1-diphosphate: step 5/9. In terms of biological role, IGPS catalyzes the conversion of PRFAR and glutamine to IGP, AICAR and glutamate. The HisF subunit catalyzes the cyclization activity that produces IGP and AICAR from PRFAR using the ammonia provided by the HisH subunit. The chain is Imidazole glycerol phosphate synthase subunit HisF from Pseudomonas syringae pv. syringae (strain B728a).